Here is a 289-residue protein sequence, read N- to C-terminus: Orotidine 5'-phosphate decarboxylase (289 aa).

The active-site Proton donor is the lysine 97.

It belongs to the OMP decarboxylase family. Type 2 subfamily.

It carries out the reaction orotidine 5'-phosphate + H(+) = UMP + CO2. Its pathway is pyrimidine metabolism; UMP biosynthesis via de novo pathway; UMP from orotate: step 2/2. The sequence is that of Orotidine 5'-phosphate decarboxylase from Petrotoga mobilis (strain DSM 10674 / SJ95).